The chain runs to 67 residues: Photosystem II reaction center protein H (67 aa).

A helical membrane pass occupies residues 27 to 47 (GAVPVMAFIGVLLLVFLVILL).

It belongs to the PsbH family. PSII is composed of 1 copy each of membrane proteins PsbA, PsbB, PsbC, PsbD, PsbE, PsbF, PsbH, PsbI, PsbJ, PsbK, PsbL, PsbM, PsbT, PsbX, PsbY, Psb30/Ycf12, peripheral proteins PsbO, CyanoQ (PsbQ), PsbU, PsbV and a large number of cofactors. It forms dimeric complexes.

It localises to the cellular thylakoid membrane. Its function is as follows. One of the components of the core complex of photosystem II (PSII), required for its stability and/or assembly. PSII is a light-driven water:plastoquinone oxidoreductase that uses light energy to abstract electrons from H(2)O, generating O(2) and a proton gradient subsequently used for ATP formation. It consists of a core antenna complex that captures photons, and an electron transfer chain that converts photonic excitation into a charge separation. In Prochlorococcus marinus (strain MIT 9211), this protein is Photosystem II reaction center protein H.